We begin with the raw amino-acid sequence, 139 residues long: Putative pre-16S rRNA nuclease (139 aa).

This sequence belongs to the YqgF nuclease family.

The protein localises to the cytoplasm. Could be a nuclease involved in processing of the 5'-end of pre-16S rRNA. This chain is Putative pre-16S rRNA nuclease, found in Streptococcus pneumoniae serotype 19F (strain G54).